A 140-amino-acid chain; its full sequence is Early nodulin-like protein 22 (140 aa).

Positions 1–28 are cleaved as a signal peptide; the sequence is MAQSSGHVSYVAVTVPIAIVMTVLCLFL. One can recognise a Phytocyanin domain in the interval 39-138; the sequence is TTYIVGGDDG…GLKMAIKALA (100 aa). A glycan (N-linked (GlcNAc...) asparagine) is linked at Asn85. An intrachain disulfide couples Cys92 to Cys126.

This sequence belongs to the early nodulin-like (ENODL) family.

Its function is as follows. May act as a carbohydrate transporter. In Arabidopsis thaliana (Mouse-ear cress), this protein is Early nodulin-like protein 22.